Consider the following 501-residue polypeptide: HMG-box protein STE11 (501 aa).

Residues 142-153 (PVNMVGSLSGSP) are compositionally biased toward polar residues. Disordered stretches follow at residues 142-205 (PVNM…KRPL) and 246-293 (YAEM…SLEQ). Residues 192–204 (SRSGSSSSGIKRP) show a composition bias toward low complexity. A DNA-binding region (HMG box) is located at residues 201-265 (IKRPLNSFML…RHAKEYPDYK (65 aa)). Over residues 246-263 (YAEMAQRERERHAKEYPD) the composition is skewed to basic and acidic residues.

In terms of processing, phosphorylated by MAPK2.

Its subcellular location is the nucleus. In Pneumocystis carinii, this protein is HMG-box protein STE11.